The sequence spans 400 residues: Argininosuccinate synthase (400 aa).

10–18 provides a ligand contact to ATP; the sequence is AFSGGLDTT. An L-citrulline-binding site is contributed by tyrosine 87. An ATP-binding site is contributed by glycine 117. The L-aspartate site is built by threonine 119, asparagine 123, and aspartate 124. Residue asparagine 123 coordinates L-citrulline. Arginine 127, serine 173, serine 182, glutamate 255, and tyrosine 267 together coordinate L-citrulline.

This sequence belongs to the argininosuccinate synthase family. Type 1 subfamily. In terms of assembly, homotetramer.

The protein resides in the cytoplasm. The enzyme catalyses L-citrulline + L-aspartate + ATP = 2-(N(omega)-L-arginino)succinate + AMP + diphosphate + H(+). Its pathway is amino-acid biosynthesis; L-arginine biosynthesis; L-arginine from L-ornithine and carbamoyl phosphate: step 2/3. The sequence is that of Argininosuccinate synthase from Natronomonas pharaonis (strain ATCC 35678 / DSM 2160 / CIP 103997 / JCM 8858 / NBRC 14720 / NCIMB 2260 / Gabara) (Halobacterium pharaonis).